Here is a 2329-residue protein sequence, read N- to C-terminus: Pre-mRNA-splicing factor 8 homolog (2329 aa).

Positions 1-53 (MANYGGHPQTEPHAIPDSILEEKSRKWKQLQGKRYSEKKKFGMSDTQKEEMPP) are disordered. Over residues 34 to 53 (RYSEKKKFGMSDTQKEEMPP) the composition is skewed to basic and acidic residues. The reverse transcriptase homology domain stretch occupies residues 804-1295 (TTVHWLESRR…KIQTRIKIGL (492 aa)). The segment at 1296-1570 (NSKMPSRFPP…TLKISLIQIF (275 aa)) is linker. The segment at 1506 to 1519 (MKFKKLTNAQRSGL) is important for branch point selection. The tract at residues 1574–1745 (LWQKIHESVV…LRERIRKGLQ (172 aa)) is restriction endonuclease homology domain. Residues 1760–2013 (NYGELFSNQI…ILGMEISAPS (254 aa)) form an RNase H homology domain region. Residues 2096-2227 (TYILPKNILK…LTAYKLTPSG (132 aa)) form the MPN domain.

As to quaternary structure, part of the U5 snRNP complex and of the U4/U6-U5 tri-snRNP complex.

The protein resides in the nucleus. In terms of biological role, functions as a scaffold that mediates the ordered assembly of spliceosomal proteins and snRNAs. Required for the assembly of the U4/U6-U5 tri-snRNP complex. Functions as a scaffold that positions spliceosomal U2, U5 and U6 snRNAs at splice sites on pre-mRNA substrates, so that splicing can occur. Interacts with both the 5' and the 3' splice site. The sequence is that of Pre-mRNA-splicing factor 8 homolog (prp-8) from Caenorhabditis elegans.